Consider the following 67-residue polypeptide: Non-specific lipid-transfer protein 2P (67 aa).

4 disulfides stabilise this stretch: C2–C34, C10–C24, C25–C60, and C36–C67.

Its function is as follows. Transfer lipids across membranes. May play a role in plant defense or in the biosynthesis of cuticle layers. In Triticum aestivum (Wheat), this protein is Non-specific lipid-transfer protein 2P.